Consider the following 205-residue polypeptide: Putative 3-methyladenine DNA glycosylase (205 aa).

This sequence belongs to the DNA glycosylase MPG family.

This Bacillus anthracis (strain A0248) protein is Putative 3-methyladenine DNA glycosylase.